Here is a 545-residue protein sequence, read N- to C-terminus: Tripartite motif-containing 55 (545 aa).

An RING-type zinc finger spans residues 26–82 (CPICLEMFTKPVVILPCQHNLCRKCASDIFQASNPYLPTRGGTTVASGGRFRCPSCR). The B box-type zinc-finger motif lies at 119–161 (LDQPMCEEHEEERINIYCLNCEVPTCSLCKVFGAHKDCQVAPL). Residues cysteine 124, histidine 127, cysteine 147, and histidine 153 each coordinate Zn(2+). The COS domain occupies 269 to 327 (MDEPEMAVFLQNAKTLLQKIVEASKAFQMEKLEQGYEIMSNFTVNLNREEKIIREIDFS). Disordered regions lie at residues 324–352 (IDFS…VEVE), 359–378 (IASS…SQLP), and 417–532 (SQQT…EPAR). The span at 328 to 352 (REEEEEEDAGEIDEEGEGEDAVEVE) shows a compositional bias: acidic residues. Residues 417–428 (SQQTTQSETSGP) are compositionally biased toward polar residues. Residues 474-485 (SSVQSAEVAEAA) show a composition bias toward low complexity. Residues 486-506 (TNEQAAVSGKESSSTAATSQI) are compositionally biased toward polar residues.

Targeted for degradation through the proteasomal and lysosomal pathways in the presence of SUMO3. In terms of tissue distribution, widely expressed in various tissues, besides skeletal muscle and heart, such as brain, lung, liver, spleen and kidney.

The protein localises to the nucleus. Its subcellular location is the cytoplasm. It carries out the reaction S-ubiquitinyl-[E2 ubiquitin-conjugating enzyme]-L-cysteine + [acceptor protein]-L-lysine = [E2 ubiquitin-conjugating enzyme]-L-cysteine + N(6)-ubiquitinyl-[acceptor protein]-L-lysine.. Its function is as follows. E3 ubiquitin ligase that plays an important role in regulating cardiac development and contractility, muscle growth, metabolism, and fiber-type differentiation. Acts as a critical factor that regulates cardiomyocyte size during development in concert with TRIM63 by regulating E2F1-mediated gene expression. Plays a role in apoptosis induction in cardiomyocytes by promoting ubiquitination of the DUSP1 phosphatase. Promotes non-canonical NF-kappa-B signaling and B-cell-mediated immune responses by mediating NFKB2 'Lys-48'-linked ubiquitination and processing. In turn, NFKB2 is further processed by valosin-containing protein/VCP, an ATPase that mediates ubiquitin-dependent protein degradation by the proteasome. May play a role in preventing macrophages from producing inflammatory factors and migrating by downregulating the level of nuclear NF-kappa-B subunit RELA. Modifies also PPARG via polyubiquitination and accelerates PPARG proteasomal degradation to inhibit its activity. This Mus musculus (Mouse) protein is Tripartite motif-containing 55 (Trim55).